The sequence spans 274 residues: Diaminopimelate epimerase (274 aa).

Substrate-binding residues include asparagine 11, glutamine 44, and asparagine 64. The active-site Proton donor is cysteine 73. Substrate-binding positions include 74–75 (GN), asparagine 157, asparagine 190, and 208–209 (ER). The active-site Proton acceptor is cysteine 217. 218–219 (GS) serves as a coordination point for substrate.

This sequence belongs to the diaminopimelate epimerase family. As to quaternary structure, homodimer.

It localises to the cytoplasm. It catalyses the reaction (2S,6S)-2,6-diaminopimelate = meso-2,6-diaminopimelate. Its pathway is amino-acid biosynthesis; L-lysine biosynthesis via DAP pathway; DL-2,6-diaminopimelate from LL-2,6-diaminopimelate: step 1/1. Catalyzes the stereoinversion of LL-2,6-diaminopimelate (L,L-DAP) to meso-diaminopimelate (meso-DAP), a precursor of L-lysine and an essential component of the bacterial peptidoglycan. The protein is Diaminopimelate epimerase of Histophilus somni (strain 129Pt) (Haemophilus somnus).